The chain runs to 156 residues: Small ribosomal subunit protein uS7 (156 aa).

Belongs to the universal ribosomal protein uS7 family. In terms of assembly, part of the 30S ribosomal subunit. Contacts proteins S9 and S11.

In terms of biological role, one of the primary rRNA binding proteins, it binds directly to 16S rRNA where it nucleates assembly of the head domain of the 30S subunit. Is located at the subunit interface close to the decoding center, probably blocks exit of the E-site tRNA. This is Small ribosomal subunit protein uS7 from Geobacter metallireducens (strain ATCC 53774 / DSM 7210 / GS-15).